The sequence spans 142 residues: Deoxyuridine 5'-triphosphate nucleotidohydrolase (142 aa).

Residues 62–64 (RSG), asparagine 75, and 79–81 (TID) each bind substrate.

This sequence belongs to the dUTPase family. Requires Mg(2+) as cofactor.

It carries out the reaction dUTP + H2O = dUMP + diphosphate + H(+). It functions in the pathway pyrimidine metabolism; dUMP biosynthesis; dUMP from dCTP (dUTP route): step 2/2. Functionally, this enzyme is involved in nucleotide metabolism: it produces dUMP, the immediate precursor of thymidine nucleotides and it decreases the intracellular concentration of dUTP so that uracil cannot be incorporated into DNA. This is Deoxyuridine 5'-triphosphate nucleotidohydrolase from Picosynechococcus sp. (strain ATCC 27264 / PCC 7002 / PR-6) (Agmenellum quadruplicatum).